The primary structure comprises 493 residues: Ketol-acid reductoisomerase (NADP(+)) (493 aa).

The 195-residue stretch at 14 to 208 (LDQLGRCRFM…GGDRAGVLES (195 aa)) folds into the KARI N-terminal Rossmann domain. Residues 45 to 48 (CGAQ), arginine 68, arginine 76, serine 78, and 108 to 110 (DKQ) contribute to the NADP(+) site. Histidine 132 is a catalytic residue. Residue glycine 158 participates in NADP(+) binding. 2 KARI C-terminal knotted domains span residues 209-345 (SFVA…APKA) and 346-486 (DGIK…MTDM). Mg(2+) contacts are provided by aspartate 217, glutamate 221, glutamate 390, and glutamate 394. Serine 415 contributes to the substrate binding site.

Belongs to the ketol-acid reductoisomerase family. Requires Mg(2+) as cofactor.

The enzyme catalyses (2R)-2,3-dihydroxy-3-methylbutanoate + NADP(+) = (2S)-2-acetolactate + NADPH + H(+). It catalyses the reaction (2R,3R)-2,3-dihydroxy-3-methylpentanoate + NADP(+) = (S)-2-ethyl-2-hydroxy-3-oxobutanoate + NADPH + H(+). Its pathway is amino-acid biosynthesis; L-isoleucine biosynthesis; L-isoleucine from 2-oxobutanoate: step 2/4. It participates in amino-acid biosynthesis; L-valine biosynthesis; L-valine from pyruvate: step 2/4. Functionally, involved in the biosynthesis of branched-chain amino acids (BCAA). Catalyzes an alkyl-migration followed by a ketol-acid reduction of (S)-2-acetolactate (S2AL) to yield (R)-2,3-dihydroxy-isovalerate. In the isomerase reaction, S2AL is rearranged via a Mg-dependent methyl migration to produce 3-hydroxy-3-methyl-2-ketobutyrate (HMKB). In the reductase reaction, this 2-ketoacid undergoes a metal-dependent reduction by NADPH to yield (R)-2,3-dihydroxy-isovalerate. The chain is Ketol-acid reductoisomerase (NADP(+)) from Actinobacillus succinogenes (strain ATCC 55618 / DSM 22257 / CCUG 43843 / 130Z).